The following is a 111-amino-acid chain: Large ribosomal subunit protein uL22 (111 aa).

The protein belongs to the universal ribosomal protein uL22 family. In terms of assembly, part of the 50S ribosomal subunit.

Its function is as follows. This protein binds specifically to 23S rRNA; its binding is stimulated by other ribosomal proteins, e.g. L4, L17, and L20. It is important during the early stages of 50S assembly. It makes multiple contacts with different domains of the 23S rRNA in the assembled 50S subunit and ribosome. In terms of biological role, the globular domain of the protein is located near the polypeptide exit tunnel on the outside of the subunit, while an extended beta-hairpin is found that lines the wall of the exit tunnel in the center of the 70S ribosome. The sequence is that of Large ribosomal subunit protein uL22 from Wigglesworthia glossinidia brevipalpis.